We begin with the raw amino-acid sequence, 190 residues long: Nuclear transcription factor Y subunit B-2 (190 aa).

The tract at residues 1-30 is disordered; the sequence is MGDSDRDSGGGQNGNNQNGQSSLSPREQDR. A DNA-binding region spans residues 32-38; sequence LPIANVS. A subunit association domain (SAD) region spans residues 59-70; it reads MQECVSEFISFV. The disordered stretch occupies residues 168–190; it reads HMYGATGGGSDSGGGAASGRTRT. Over residues 172 to 184 the composition is skewed to gly residues; sequence ATGGGSDSGGGAA.

Belongs to the NFYB/HAP3 subunit family. Heterotrimeric transcription factor composed of three components, NF-YA, NF-YB and NF-YC. NF-YB and NF-YC must interact and dimerize for NF-YA association and DNA binding. Binds directly with DPB3-1. Ubiquitous. Predominantly expressed in flowers and siliques.

The protein localises to the nucleus. Functionally, component of the NF-Y/HAP transcription factor complex. The NF-Y complex stimulates the transcription of various genes by recognizing and binding to a CCAAT motif in promoters. This is Nuclear transcription factor Y subunit B-2 from Arabidopsis thaliana (Mouse-ear cress).